Here is a 1069-residue protein sequence, read N- to C-terminus: MLPNFWNFQFIFVIFCWIPIVVSDEKIVLKIGSISSRDNAKMLESILEMAKKKMTEQGVLGEKLDIQIITVEGCGASFEGVAAAAELYHVQKVDAYFGPYCSKELSPVATMASYWNIPIFAYTATSAEFANTKVYKTLLRTSFQSLNSISEATAAFMAHHNITKAAIVANIGTDSFEKIQSLEKALRSRGITVARRVMFEEAASAQDLVDNGYMNELRDNARVILPIFSSTRDLSTVFRNATWLANMASPEFIYINPLIVARNSEEPPVFYGKMAQKSIKAENPNTIQIYNSYGFSDDLLNEFLAIFDQNQRIYIDEKDLFNYVALYESFCVFAKLTEKYLHSLKEKPEDGKIRIDGKALWNMAVGMTFQGVLDNVIFDNGAERMTSFSAFYVDEKRDQIRTVSLINSTVTSKNCMDPVCIELVVSDVVTKFWSSPSGKLPDSEPECGFREENCDYTQTIVIATAVVCIILTVFLGIWLRRACETSALDKMPWRVFRDDVQILDEEQVKSVVSLNSASTKMSQVETKLIKNHAIVGVNTHAVYDLYEQRQNIRFTREDLILLTKMKQAVHDNINPFIGVSFNEKSELLLLWKFCSRGTLQDVIYCEKFAMDEKFQGAFVRDITMGLEYLHSSPIGYHGGLACWSVLIDKNWMLKLTDYAVCDPLKRWEKHGRINCKVDNEAEKQWQKMASLYVPPEIRTANEKNRLKRMDQKWQGQTILKRQQSDIYAFGVIIYEILFRSLPYDEKVDLTELAQKAAEGDKIQKPSIQRNKKLNPDLIALLQDCWSDQPDMRPTIRRVRLATEIALKTKGNLVDSMMRMMEEYANNLEKLVGERTKLAEEANLRAERLLFQLLPKHVAIELKAGRTVAPKMYDSATVMFSDIVGFTKLCSASTPIEVVNLLNKLYSEFDTVISKHDCYKVETIGDAYMVVSGIPIENGQRHVANISAVTLGIMDLLKVFEVPHRRDYRLTIRLGFASGQVSAAVVGLSSPRYCLFGETVNIAAVMESSGEGGRVQITETSKILLENEYPEFIIEIRGINKDVKQDDFVTYWLTGKDEDYFKKKNNTFDF.

Positions 1–23 are cleaved as a signal peptide; it reads MLPNFWNFQFIFVIFCWIPIVVS. The Extracellular portion of the chain corresponds to 24-458; that stretch reads DEKIVLKIGS…FREENCDYTQ (435 aa). Residues Asn-161, Asn-240, and Asn-407 are each glycosylated (N-linked (GlcNAc...) asparagine). The helical transmembrane segment at 459-479 threads the bilayer; it reads TIVIATAVVCIILTVFLGIWL. The Cytoplasmic segment spans residues 480–1069; the sequence is RRACETSALD…FKKKNNTFDF (590 aa). The region spanning 497 to 806 is the Protein kinase domain; it reads RDDVQILDEE…RVRLATEIAL (310 aa). Residues 503–511 and Lys-527 contribute to the ATP site; that span reads LDEEQVKSV. The Guanylate cyclase domain occupies 876–1006; it reads TVMFSDIVGF…ETVNIAAVME (131 aa). Mg(2+) contacts are provided by Asp-881, Ile-882, and Asp-925.

It belongs to the adenylyl cyclase class-4/guanylyl cyclase family. In terms of tissue distribution, expressed bilaterally in ASE and AFD sensory neurons.

The protein localises to the cell membrane. The enzyme catalyses GTP = 3',5'-cyclic GMP + diphosphate. Functionally, guanylate cyclase involved in the production of the second messenger cGMP. This Caenorhabditis elegans protein is Receptor-type guanylate cyclase gcy-29.